Here is a 163-residue protein sequence, read N- to C-terminus: Protein-export protein SecB (163 aa).

It belongs to the SecB family. Homotetramer, a dimer of dimers. One homotetramer interacts with 1 SecA dimer.

Its subcellular location is the cytoplasm. Functionally, one of the proteins required for the normal export of preproteins out of the cell cytoplasm. It is a molecular chaperone that binds to a subset of precursor proteins, maintaining them in a translocation-competent state. It also specifically binds to its receptor SecA. This Burkholderia cenocepacia (strain ATCC BAA-245 / DSM 16553 / LMG 16656 / NCTC 13227 / J2315 / CF5610) (Burkholderia cepacia (strain J2315)) protein is Protein-export protein SecB.